Here is a 315-residue protein sequence, read N- to C-terminus: MTNDFHHITVLLHETVDMLDIKPDGIYVDATLGGAGHSEYLLSQLGPDGHLYAFDQDQKAIDNAHIRLKKYVDTGQVTFIKDNFRNLSSNLKALGVSEINGICYDLGVSSPQLDERERGFSYKQDAPLDMRMNREQSLTAYDVVNTYSYHDLVRIFFKYGEDKFSKQIARKIEQVRAEKTISTTTELAEIIKSSKSAKELKKKGHPAKQIFQAIRIEVNDELGAADESIQQAMDLLAVDGRISVITFHSLEDRLTKQLFKEASTVEVPKGLPFIPDDLQPKMELVNRKPILPSQEELEANNRAHSAKLRVARRIR.

Residues 35 to 37, Asp-55, Phe-84, Asp-105, and Gln-112 contribute to the S-adenosyl-L-methionine site; that span reads AGH.

This sequence belongs to the methyltransferase superfamily. RsmH family.

It is found in the cytoplasm. The catalysed reaction is cytidine(1402) in 16S rRNA + S-adenosyl-L-methionine = N(4)-methylcytidine(1402) in 16S rRNA + S-adenosyl-L-homocysteine + H(+). In terms of biological role, specifically methylates the N4 position of cytidine in position 1402 (C1402) of 16S rRNA. This Streptococcus agalactiae serotype Ia (strain ATCC 27591 / A909 / CDC SS700) protein is Ribosomal RNA small subunit methyltransferase H.